Reading from the N-terminus, the 123-residue chain is Polyadenylate-binding protein-interacting protein 2B (123 aa).

Met1 is modified (N-acetylmethionine). A compositionally biased stretch (polar residues) spans 1-13 (MNGSNMANTSPSV). Disordered regions lie at residues 1 to 30 (MNGSNMANTSPSVKSKEDQGLSGHDEKENP) and 91 to 123 (NGLSVSEGHDSEDILSKSNLNPDAKEFIPGEKY). Composition is skewed to basic and acidic residues over residues 14–30 (KSKEDQGLSGHDEKENP) and 113–123 (DAKEFIPGEKY).

This sequence belongs to the PAIP2 family. As to quaternary structure, interacts (via central acidic portion and C-terminus) with PABPC1 (via the second and third RRM domains and the C-terminus). In terms of processing, ubiquitinated in vitro. As to expression, expressed in brain, cervix, heart, liver, ovary, kidney, prostate and testis.

Functionally, inhibits translation of capped and polyadenylated mRNAs by displacing PABPC1 from the poly(A) tail. This chain is Polyadenylate-binding protein-interacting protein 2B (PAIP2B), found in Homo sapiens (Human).